Here is a 341-residue protein sequence, read N- to C-terminus: S-adenosylmethionine:tRNA ribosyltransferase-isomerase (341 aa).

It belongs to the QueA family. Monomer.

Its subcellular location is the cytoplasm. The catalysed reaction is 7-aminomethyl-7-carbaguanosine(34) in tRNA + S-adenosyl-L-methionine = epoxyqueuosine(34) in tRNA + adenine + L-methionine + 2 H(+). It functions in the pathway tRNA modification; tRNA-queuosine biosynthesis. In terms of biological role, transfers and isomerizes the ribose moiety from AdoMet to the 7-aminomethyl group of 7-deazaguanine (preQ1-tRNA) to give epoxyqueuosine (oQ-tRNA). This is S-adenosylmethionine:tRNA ribosyltransferase-isomerase from Desulfitobacterium hafniense (strain DSM 10664 / DCB-2).